The chain runs to 274 residues: MKITAEMIKDLRQKTHAGMNECHKALQQTEGNIEKAIVFLREKGIIKAAQKQGRVTSEGITNIVFAGNNAFLYEINSETDFVSKNEHFQQLVKMLGEIILKKQLSNVKDLLAFNYQNKTVQELLFEKTSVLGENITLKRVLKVTKKPQESFGIYKHQGGRISVLVVLKNDCPSVSEDIAMHIAASKPQFLTPDKVDPTFLAEEKKILHKQAAKELSDKPAQMIEKIIENRLGKMLKDMCLSEQPFVKNADQKVKDYLKANNTDVVYYVRWEMGN.

An involved in Mg(2+) ion dislocation from EF-Tu region spans residues 79–82 (TDFV).

It belongs to the EF-Ts family.

The protein localises to the cytoplasm. Functionally, associates with the EF-Tu.GDP complex and induces the exchange of GDP to GTP. It remains bound to the aminoacyl-tRNA.EF-Tu.GTP complex up to the GTP hydrolysis stage on the ribosome. This chain is Elongation factor Ts, found in Aster yellows witches'-broom phytoplasma (strain AYWB).